Reading from the N-terminus, the 509-residue chain is MTSSPELARAVAATLARHVTDVVICPGSRNSPLSLELIARDDIRVHTRIDERSAAFLALGLARSSKRHVAVVTTSGTAVANCAPAMIEAAYSHTPLIMVSADRPERLHGTGANQTIEQRGIFNVVDTDHVVDITDLNSISFARNVIHINVALDVPLVDVLPEVGDPVERVREVIEVDHGEVVLNLNERILVVAGDEAWEVPGLEDVPTIAEPSAPAPYHPVHPLAAQIFAHKEIKPEHIVVVGHPTLHRAVLSLLADVPVTVLTKTDTITGNPQAVGSRVKVTGELDKRWLQICEDASTLCADRVKEVLEGHGFTGLHVAAAVADTMAVGDTLFLGASNPVRDASLVGMPLGGVDIFAARGAAGIDGTVSQAVGVALDVQHRDATAIRADRTVALMGDVTFLHDVGGLLGARPENLTIVVANDDGCGIFETLEIGAPEFRPSFEQAFGTPHGVHIEAIAQAYGVNYLRAETLPELIEALIDTTDSAGFNIIEAVTTRSTRRDIDKALTL.

This sequence belongs to the TPP enzyme family. MenD subfamily. As to quaternary structure, homodimer. It depends on Mg(2+) as a cofactor. The cofactor is Mn(2+). Thiamine diphosphate serves as cofactor.

The catalysed reaction is isochorismate + 2-oxoglutarate + H(+) = 5-enolpyruvoyl-6-hydroxy-2-succinyl-cyclohex-3-ene-1-carboxylate + CO2. Its pathway is quinol/quinone metabolism; 1,4-dihydroxy-2-naphthoate biosynthesis; 1,4-dihydroxy-2-naphthoate from chorismate: step 2/7. It participates in quinol/quinone metabolism; menaquinone biosynthesis. Catalyzes the thiamine diphosphate-dependent decarboxylation of 2-oxoglutarate and the subsequent addition of the resulting succinic semialdehyde-thiamine pyrophosphate anion to isochorismate to yield 2-succinyl-5-enolpyruvyl-6-hydroxy-3-cyclohexene-1-carboxylate (SEPHCHC). The chain is 2-succinyl-5-enolpyruvyl-6-hydroxy-3-cyclohexene-1-carboxylate synthase from Corynebacterium diphtheriae (strain ATCC 700971 / NCTC 13129 / Biotype gravis).